A 433-amino-acid chain; its full sequence is MSTSAKTQSAPDQFFSASLAEADPEIAAAIAGELGRQRHEIELIASENIVSRAVLEAQGSVMTNKYAEGYPGHRYYGGCEFVDVAENLAIDRAKKLFGAGFANVQPNSGSQMNQAVFLALLQPGDTFMGLDLAAGGHLTHGATVNMSGKWFKPVHYTVRREDGIIDMDEVAKIAEANKPKLIIAGGSAYSRAWDFKRFREIADSVGAYFMVDMAHFAGLVAGGVHASPVPHAHVCTTTTHKSLRGPRGGLILCNDEALAKKFNSAIFPGLQGGPLMHVIAAKAVAFKEALQPDFKVYAKNVVENAKALAETLRGHGFDIVSGGTDNHLMLVDLRPKALKGNVSEKALVRAGITCNKNGIPFDPEKPFVTSGIRLGTPAATTRGFGVAEFQQVGGMIAEVLNAIAQSSDGQAPLVEAAIRQRVKELTDRFPIYS.

Residues leucine 132 and 136-138 (GHL) contribute to the (6S)-5,6,7,8-tetrahydrofolate site. Lysine 241 carries the N6-(pyridoxal phosphate)lysine modification.

Belongs to the SHMT family. As to quaternary structure, homodimer. Pyridoxal 5'-phosphate is required as a cofactor.

Its subcellular location is the cytoplasm. It carries out the reaction (6R)-5,10-methylene-5,6,7,8-tetrahydrofolate + glycine + H2O = (6S)-5,6,7,8-tetrahydrofolate + L-serine. The protein operates within one-carbon metabolism; tetrahydrofolate interconversion. Its pathway is amino-acid biosynthesis; glycine biosynthesis; glycine from L-serine: step 1/1. Its function is as follows. Catalyzes the reversible interconversion of serine and glycine with tetrahydrofolate (THF) serving as the one-carbon carrier. This reaction serves as the major source of one-carbon groups required for the biosynthesis of purines, thymidylate, methionine, and other important biomolecules. Also exhibits THF-independent aldolase activity toward beta-hydroxyamino acids, producing glycine and aldehydes, via a retro-aldol mechanism. The protein is Serine hydroxymethyltransferase of Rhodopseudomonas palustris (strain BisA53).